The chain runs to 1184 residues: DNA-directed RNA polymerase subunit beta (1184 aa).

The disordered stretch occupies residues D1160–E1184.

It belongs to the RNA polymerase beta chain family. The RNAP catalytic core consists of 2 alpha, 1 beta, 1 beta' and 1 omega subunit. When a sigma factor is associated with the core the holoenzyme is formed, which can initiate transcription.

It catalyses the reaction RNA(n) + a ribonucleoside 5'-triphosphate = RNA(n+1) + diphosphate. Functionally, DNA-dependent RNA polymerase catalyzes the transcription of DNA into RNA using the four ribonucleoside triphosphates as substrates. The polypeptide is DNA-directed RNA polymerase subunit beta (Listeria innocua serovar 6a (strain ATCC BAA-680 / CLIP 11262)).